A 123-amino-acid polypeptide reads, in one-letter code: Transmembrane protein 254 (123 aa).

3 helical membrane-spanning segments follow: residues 15–35 (LFWFTVIAVSFSYYTWVVFWP), 63–83 (NGYWLAWLVHVGESLYALVLC), and 95–115 (LLWFLQTFLFGVASLSILFAY).

It localises to the membrane. The protein is Transmembrane protein 254 (Tmem254) of Rattus norvegicus (Rat).